The chain runs to 420 residues: Exodeoxyribonuclease 7 large subunit (420 aa).

Belongs to the XseA family. As to quaternary structure, heterooligomer composed of large and small subunits.

Its subcellular location is the cytoplasm. The catalysed reaction is Exonucleolytic cleavage in either 5'- to 3'- or 3'- to 5'-direction to yield nucleoside 5'-phosphates.. In terms of biological role, bidirectionally degrades single-stranded DNA into large acid-insoluble oligonucleotides, which are then degraded further into small acid-soluble oligonucleotides. The sequence is that of Exodeoxyribonuclease 7 large subunit from Helicobacter pylori (strain P12).